A 279-amino-acid chain; its full sequence is MAYDAFGKPGYGPDFNSAFSPGMGGGAGFNEYDQSSQPSVDRQQGAGNKLRPVTIKQILNASQVHADAEFKIDGVEVGQVTFVGVLRNIHAQTTNTTYQIEDGTGMIEVRHWEHIDALSELATDTYVRVYGNIKIFSGKIYIASQYIRTIKDHNEVHFHFLEAIAVHLHFTQKANAVNGANAPGYGTSNALGYNNISSNGAANSLEQKLAEYSLTPAQMTVMQAIHSAPETNEGVHVRQLAQSVGPGIDLTAVTDFLQQEGIIYTTIDENHFKSVLQDQ.

The tract at residues 26–47 (GAGFNEYDQSSQPSVDRQQGAG) is disordered. The segment covering 32–46 (YDQSSQPSVDRQQGA) has biased composition (polar residues). The segment at residues 80-140 (VTFVGVLRNI…GNIKIFSGKI (61 aa)) is a DNA-binding region (OB).

It belongs to the replication factor A protein 2 family. Heterotrimer of 68, 30, and 12 kDa chains. In terms of processing, phosphorylated in a cell cycle-dependent manner. Hypophosphorylated in G1, becomes phosphorylated at the G1/S boundary, it is maintained in this state through the M phase.

The protein localises to the nucleus. Functionally, binds to single-stranded sequences. The polypeptide is Replication factor A protein 2 (ssb2) (Schizosaccharomyces pombe (strain 972 / ATCC 24843) (Fission yeast)).